A 574-amino-acid chain; its full sequence is Potassium-transporting ATPase potassium-binding subunit (574 aa).

Transmembrane regions (helical) follow at residues 7–27 (IELG…GTHL), 65–85 (IEYA…SYLI), 136–156 (FGLA…AAAL), 175–195 (LIRI…IILL), 264–284 (FVEM…FGLS), 292–312 (WSIW…CFIF), 390–410 (GLYG…LMIG), 427–447 (MAVL…ALAL), 494–514 (LLLG…ILAI), and 534–554 (GWLF…LNFF).

Belongs to the KdpA family. In terms of assembly, the system is composed of three essential subunits: KdpA, KdpB and KdpC.

The protein localises to the cell inner membrane. In terms of biological role, part of the high-affinity ATP-driven potassium transport (or Kdp) system, which catalyzes the hydrolysis of ATP coupled with the electrogenic transport of potassium into the cytoplasm. This subunit binds the periplasmic potassium ions and delivers the ions to the membrane domain of KdpB through an intramembrane tunnel. The polypeptide is Potassium-transporting ATPase potassium-binding subunit (Methylacidiphilum infernorum (isolate V4) (Methylokorus infernorum (strain V4))).